The primary structure comprises 251 residues: Flap endonuclease Xni (251 aa).

Aspartate 104 provides a ligand contact to Mg(2+). Residues 160 to 249 (VTPEQLADYW…LDGNLQQLRL (90 aa)) enclose the 5'-3' exonuclease domain. 5 residues coordinate K(+): leucine 171, alanine 172, proline 180, valine 182, and isoleucine 185. The interval 184–189 (GIGPKS) is interaction with DNA.

This sequence belongs to the Xni family. Requires Mg(2+) as cofactor. K(+) serves as cofactor.

In terms of biological role, has flap endonuclease activity. During DNA replication, flap endonucleases cleave the 5'-overhanging flap structure that is generated by displacement synthesis when DNA polymerase encounters the 5'-end of a downstream Okazaki fragment. The protein is Flap endonuclease Xni of Klebsiella pneumoniae subsp. pneumoniae (strain ATCC 700721 / MGH 78578).